A 368-amino-acid chain; its full sequence is Spermidine/putrescine import ATP-binding protein PotA (368 aa).

One can recognise an ABC transporter domain in the interval 8-238 (IELRGVTKNF…PANLYVARFV (231 aa)). 40 to 47 (GPSGCGKT) provides a ligand contact to ATP.

Belongs to the ABC transporter superfamily. Spermidine/putrescine importer (TC 3.A.1.11.1) family. The complex is composed of two ATP-binding proteins (PotA), two transmembrane proteins (PotB and PotC) and a solute-binding protein (PotD).

The protein localises to the cell inner membrane. It carries out the reaction ATP + H2O + polyamine-[polyamine-binding protein]Side 1 = ADP + phosphate + polyamineSide 2 + [polyamine-binding protein]Side 1.. Part of the ABC transporter complex PotABCD involved in spermidine/putrescine import. Responsible for energy coupling to the transport system. The chain is Spermidine/putrescine import ATP-binding protein PotA from Nitratidesulfovibrio vulgaris (strain ATCC 29579 / DSM 644 / CCUG 34227 / NCIMB 8303 / VKM B-1760 / Hildenborough) (Desulfovibrio vulgaris).